Consider the following 305-residue polypeptide: MKEFFRLSRKGFTGRDDVDSAQIPDDLWVKCSACRELIYKKQLNDNLKVCPKCGHHMRMSAHEWIGLLDVGSFREMDSNLLPTDPLGFVAADESYATKLAKTQQRTGMTDAVISGVGAISGIRLCIAVADFSFMGASMGSVYGEKMARAAERAAELGIPLLTINTSGGARQQEGVIGLMQMAKITMALTRLAEAGQPHIALLVDPCYGGVTASYPSVADIIIAEPGANIGFAGKRLIEQIMRQKLPAGFQTAEFMLEHGMIDMVVPRSEMRETLARILKHYQQRQAPAAKADLAARRATLPQPIM.

A CoA carboxyltransferase N-terminal domain is found at 27 to 296; the sequence is LWVKCSACRE…PAAKADLAAR (270 aa). Zn(2+) is bound by residues Cys-31, Cys-34, Cys-50, and Cys-53. The C4-type zinc-finger motif lies at 31–53; sequence CSACRELIYKKQLNDNLKVCPKC.

The protein belongs to the AccD/PCCB family. Acetyl-CoA carboxylase is a heterohexamer composed of biotin carboxyl carrier protein (AccB), biotin carboxylase (AccC) and two subunits each of ACCase subunit alpha (AccA) and ACCase subunit beta (AccD). It depends on Zn(2+) as a cofactor.

It is found in the cytoplasm. It catalyses the reaction N(6)-carboxybiotinyl-L-lysyl-[protein] + acetyl-CoA = N(6)-biotinyl-L-lysyl-[protein] + malonyl-CoA. It functions in the pathway lipid metabolism; malonyl-CoA biosynthesis; malonyl-CoA from acetyl-CoA: step 1/1. Component of the acetyl coenzyme A carboxylase (ACC) complex. Biotin carboxylase (BC) catalyzes the carboxylation of biotin on its carrier protein (BCCP) and then the CO(2) group is transferred by the transcarboxylase to acetyl-CoA to form malonyl-CoA. The polypeptide is Acetyl-coenzyme A carboxylase carboxyl transferase subunit beta (Chloroflexus aggregans (strain MD-66 / DSM 9485)).